Reading from the N-terminus, the 444-residue chain is ATP-dependent protease ATPase subunit HslU (444 aa).

ATP-binding positions include Ile20 and 62–67 (GVGKTE). The interval 130-158 (EDRILDALVPPPRGASGEPERGEDNSARQ) is disordered. ATP is bound by residues Asp257, Glu322, and Arg394.

It belongs to the ClpX chaperone family. HslU subfamily. In terms of assembly, a double ring-shaped homohexamer of HslV is capped on each side by a ring-shaped HslU homohexamer. The assembly of the HslU/HslV complex is dependent on binding of ATP.

It is found in the cytoplasm. In terms of biological role, ATPase subunit of a proteasome-like degradation complex; this subunit has chaperone activity. The binding of ATP and its subsequent hydrolysis by HslU are essential for unfolding of protein substrates subsequently hydrolyzed by HslV. HslU recognizes the N-terminal part of its protein substrates and unfolds these before they are guided to HslV for hydrolysis. This is ATP-dependent protease ATPase subunit HslU from Bordetella parapertussis (strain 12822 / ATCC BAA-587 / NCTC 13253).